We begin with the raw amino-acid sequence, 158 residues long: 2-C-methyl-D-erythritol 2,4-cyclodiphosphate synthase (158 aa).

2 residues coordinate a divalent metal cation: Asp9 and His11. Residues 9–11 (DVH) and 35–36 (HS) contribute to the 4-CDP-2-C-methyl-D-erythritol 2-phosphate site. His43 contributes to the a divalent metal cation binding site. Residues 57 to 59 (DIG), 62 to 66 (FPDTD), 101 to 107 (AQAPKMA), 133 to 136 (TTTE), Phe140, and Arg143 each bind 4-CDP-2-C-methyl-D-erythritol 2-phosphate.

This sequence belongs to the IspF family. As to quaternary structure, homotrimer. A divalent metal cation serves as cofactor.

It catalyses the reaction 4-CDP-2-C-methyl-D-erythritol 2-phosphate = 2-C-methyl-D-erythritol 2,4-cyclic diphosphate + CMP. Its pathway is isoprenoid biosynthesis; isopentenyl diphosphate biosynthesis via DXP pathway; isopentenyl diphosphate from 1-deoxy-D-xylulose 5-phosphate: step 4/6. Its function is as follows. Involved in the biosynthesis of isopentenyl diphosphate (IPP) and dimethylallyl diphosphate (DMAPP), two major building blocks of isoprenoid compounds. Catalyzes the conversion of 4-diphosphocytidyl-2-C-methyl-D-erythritol 2-phosphate (CDP-ME2P) to 2-C-methyl-D-erythritol 2,4-cyclodiphosphate (ME-CPP) with a corresponding release of cytidine 5-monophosphate (CMP). This chain is 2-C-methyl-D-erythritol 2,4-cyclodiphosphate synthase, found in Vibrio campbellii (strain ATCC BAA-1116).